A 405-amino-acid polypeptide reads, in one-letter code: Diaminopimelate decarboxylase (405 aa).

Residue lysine 46 is modified to N6-(pyridoxal phosphate)lysine. Residues glycine 225 and glutamate 259 to arginine 262 contribute to the pyridoxal 5'-phosphate site. Arginine 262, arginine 298, and tyrosine 302 together coordinate substrate. Cysteine 329 serves as the catalytic Proton donor. Residues glutamate 330 and tyrosine 358 each contribute to the substrate site. Position 358 (tyrosine 358) interacts with pyridoxal 5'-phosphate.

The protein belongs to the Orn/Lys/Arg decarboxylase class-II family. LysA subfamily. In terms of assembly, homodimer. Pyridoxal 5'-phosphate is required as a cofactor.

The enzyme catalyses meso-2,6-diaminopimelate + H(+) = L-lysine + CO2. Its pathway is amino-acid biosynthesis; L-lysine biosynthesis via DAP pathway; L-lysine from DL-2,6-diaminopimelate: step 1/1. Its function is as follows. Specifically catalyzes the decarboxylation of meso-diaminopimelate (meso-DAP) to L-lysine. This Helicobacter pylori (Campylobacter pylori) protein is Diaminopimelate decarboxylase.